A 408-amino-acid chain; its full sequence is DNA primase DnaG (408 aa).

The region spanning 172 to 248 is the Toprim domain; it reads DSIIIVEGRA…HVDYIARAPP (77 aa). The Mg(2+) site is built by E178, D222, and D224. Residues 279–304 form a disordered region; that stretch reads AAGEKAETPQQPPPQQPVPQQEVREE.

Belongs to the archaeal DnaG primase family. As to quaternary structure, forms a ternary complex with MCM helicase and DNA. Component of the archaeal exosome complex. Requires Mg(2+) as cofactor.

The catalysed reaction is ssDNA + n NTP = ssDNA/pppN(pN)n-1 hybrid + (n-1) diphosphate.. Its function is as follows. RNA polymerase that catalyzes the synthesis of short RNA molecules used as primers for DNA polymerase during DNA replication. Also part of the exosome, which is a complex involved in RNA degradation. Acts as a poly(A)-binding protein that enhances the interaction between heteromeric, adenine-rich transcripts and the exosome. The polypeptide is DNA primase DnaG (Pyrobaculum aerophilum (strain ATCC 51768 / DSM 7523 / JCM 9630 / CIP 104966 / NBRC 100827 / IM2)).